A 295-amino-acid chain; its full sequence is Protease HtpX (295 aa).

Transmembrane regions (helical) follow at residues 4 to 24 (ILLF…TLSL) and 42 to 62 (QLLV…LFIS). A Zn(2+)-binding site is contributed by H147. Residue E148 is part of the active site. H151 is a binding site for Zn(2+). A run of 2 helical transmembrane segments spans residues 158–178 (VTLA…ARII) and 199–219 (ITTI…VMWF). Residue E224 coordinates Zn(2+).

The protein belongs to the peptidase M48B family. Zn(2+) is required as a cofactor.

Its subcellular location is the cell inner membrane. In Pseudomonas syringae pv. tomato (strain ATCC BAA-871 / DC3000), this protein is Protease HtpX.